The chain runs to 98 residues: Probable sodium channel toxin Ts27 (98 aa).

The signal sequence occupies residues 1–22 (MYNMVSLFIVAVLLLTYANVEG). 4 disulfides stabilise this stretch: Cys36-Cys88, Cys40-Cys63, Cys49-Cys68, and Cys53-Cys70.

This sequence belongs to the long (4 C-C) scorpion toxin superfamily. Sodium channel inhibitor family. Expressed by the venom gland.

Its subcellular location is the secreted. In terms of biological role, probable sodium channel toxin. This is Probable sodium channel toxin Ts27 from Tityus serrulatus (Brazilian scorpion).